The sequence spans 222 residues: Ribonuclease S-3 (222 aa).

The signal sequence occupies residues 1 to 22 (MVHVVMMVFLLIVLILCSSTVG). Gln31 contacts RNA. Cys37 and Cys44 are oxidised to a cystine. Asn40 is a glycosylation site (N-linked (GlcNAc...) asparagine). RNA-binding positions include His55, 92-93 (NV), Phe102, 105-106 (KE), and 109-110 (KH). His55 (proton donor) is an active-site residue. A disulfide bond links Cys70 and Cys113. Active-site residues include Glu106 and Lys109. The Proton acceptor role is filled by His110. Asn138 carries N-linked (GlcNAc...) asparagine glycosylation. Disulfide bonds link Cys177-Cys215 and Cys192-Cys203.

Belongs to the RNase T2 family. Post-translationally, N-linked core structure at Asn-138 contains xylose.

It catalyses the reaction a ribonucleotidyl-ribonucleotide-RNA + H2O = a 3'-end 3'-phospho-ribonucleotide-RNA + a 5'-end dephospho-ribonucleoside-RNA + H(+). In terms of biological role, self-incompatibility (SI) is the inherited ability of a flowering plant to prevent self-fertilization by discriminating between self and non-self pollen during pollination. In many species, self-incompatibility is controlled by the single, multiallelic locus S. This is Ribonuclease S-3 from Pyrus pyrifolia (Chinese pear).